The following is a 467-amino-acid chain: Cysteine--tRNA ligase (467 aa).

A Zn(2+)-binding site is contributed by C29. The short motif at 31–41 is the 'HIGH' region element; that stretch reads PTVYNYVHIGN. Residues C209, H234, and E238 each contribute to the Zn(2+) site. The 'KMSKS' region signature appears at 267–271; that stretch reads KMSKS. K270 is a binding site for ATP.

The protein belongs to the class-I aminoacyl-tRNA synthetase family. In terms of assembly, monomer. It depends on Zn(2+) as a cofactor.

The protein resides in the cytoplasm. The catalysed reaction is tRNA(Cys) + L-cysteine + ATP = L-cysteinyl-tRNA(Cys) + AMP + diphosphate. In Xylella fastidiosa (strain 9a5c), this protein is Cysteine--tRNA ligase.